We begin with the raw amino-acid sequence, 198 residues long: Suppressor of cytokine signaling 2 (198 aa).

The interval 1 to 31 (MTLRCLEPSGNGADRTRSQWGTAGSPEDQSP) is disordered. The tract at residues 1-75 (MTLRCLEPSG…PEGTFLIRDS (75 aa)) is interaction with AREL1. Ser30 and Ser52 each carry phosphoserine. One can recognise an SH2 domain in the interval 48 to 156 (WYWGSMTVNE…TVHLYLTKPL (109 aa)). Residues 151 to 197 (YLTKPLYTSAPTLQHFCRLSINKCTGTIRGLPLPTRLKDYLEEYKFQ) form the SOCS box domain. Residue Lys173 forms a Glycyl lysine isopeptide (Lys-Gly) (interchain with G-Cter in ubiquitin) linkage.

Substrate-recognition component of the ECS(SOCS2) complex, composed of SOCS2, CUL5, ELOB, ELOC and RNF7/RBX2. Interacts with IGF1R. Interacts with DCUN1D1. In terms of processing, ubiquitinated; mediated by AREL1 and leading to its subsequent proteasomal degradation. Ubiquitination is dependent on its phosphorylation at Ser-52, by PKC. Ubiquitination is stimulated by LPS. Phosphorylation at Ser-52 by PKC facilitates its ubiquitination and proteasomal degradation.

It is found in the cytoplasm. It functions in the pathway protein modification; protein ubiquitination. In terms of biological role, substrate-recognition component of a cullin-5-RING E3 ubiquitin-protein ligase complex (ECS complex, also named CRL5 complex), which mediates the ubiquitination and subsequent proteasomal degradation of target proteins, such as EPOR and GHR. Specifically recognizes and binds phosphorylated proteins via its SH2 domain, promoting their ubiquitination. The ECS(SOCS2) complex acts as a key regulator of growth hormone receptor (GHR) levels by mediating ubiquitination and degradation of GHR, following GHR phosphorylation by JAK2. The ECS(SOCS2) also catalyzes ubiquitination and degradation of JAK2-phosphorylated EPOR. This is Suppressor of cytokine signaling 2 (Socs2) from Rattus norvegicus (Rat).